Here is a 188-residue protein sequence, read N- to C-terminus: Small ribosomal subunit protein bS16 (188 aa).

The interval 155–188 (IAAASATEEAATEEVAEAAEEAPAAEENNETTEA) is disordered. The span at 164–188 (AATEEVAEAAEEAPAAEENNETTEA) shows a compositional bias: acidic residues.

The protein belongs to the bacterial ribosomal protein bS16 family.

This is Small ribosomal subunit protein bS16 from Flavobacterium johnsoniae (strain ATCC 17061 / DSM 2064 / JCM 8514 / BCRC 14874 / CCUG 350202 / NBRC 14942 / NCIMB 11054 / UW101) (Cytophaga johnsonae).